The following is a 435-amino-acid chain: Legumain (435 aa).

Residues 1–17 (MTWRVAVLLSLVLGAGA) form the signal peptide. The N-linked (GlcNAc...) asparagine glycan is linked to Asn-93. The active site involves His-150. A glycan (N-linked (GlcNAc...) asparagine) is linked at Asn-169. Cys-191 functions as the Nucleophile in the catalytic mechanism. Asn-265 and Asn-274 each carry an N-linked (GlcNAc...) asparagine glycan. The propeptide occupies 326–435 (DVKESQNLIG…AMDKVCLSHY (110 aa)). 2 cysteine pairs are disulfide-bonded: Cys-380/Cys-414 and Cys-392/Cys-431.

Belongs to the peptidase C13 family. Homodimer before autocatalytic removal of the propeptide. Monomer after autocatalytic processing. May interact with integrins. Glycosylated. In terms of processing, activated by autocatalytic processing at pH 4. Detected in kidney proximal tubules (at protein level). Ubiquitous. Particularly abundant in kidney and placenta.

Its subcellular location is the lysosome. It carries out the reaction Hydrolysis of proteins and small molecule substrates at -Asn-|-Xaa- bonds.. Inhibited by cystatin-C. Functionally, has a strict specificity for hydrolysis of asparaginyl bonds. Can also cleave aspartyl bonds slowly, especially under acidic conditions. Involved in the processing of proteins for MHC class II antigen presentation in the lysosomal/endosomal system. Also involved in MHC class I antigen presentation in cross-presenting dendritic cells by mediating cleavage and maturation of Perforin-2 (MPEG1), thereby promoting antigen translocation in the cytosol. Required for normal lysosomal protein degradation in renal proximal tubules. Required for normal degradation of internalized EGFR. Plays a role in the regulation of cell proliferation via its role in EGFR degradation. In Mus musculus (Mouse), this protein is Legumain (Lgmn).